A 161-amino-acid polypeptide reads, in one-letter code: Deoxyuridine 5'-triphosphate nucleotidohydrolase (161 aa).

Substrate contacts are provided by residues 80–82, asparagine 93, 97–99, and lysine 107; these read RSG and TVD.

The protein belongs to the dUTPase family. Requires Mg(2+) as cofactor.

It carries out the reaction dUTP + H2O = dUMP + diphosphate + H(+). The protein operates within pyrimidine metabolism; dUMP biosynthesis; dUMP from dCTP (dUTP route): step 2/2. Its function is as follows. This enzyme is involved in nucleotide metabolism: it produces dUMP, the immediate precursor of thymidine nucleotides and it decreases the intracellular concentration of dUTP so that uracil cannot be incorporated into DNA. This is Deoxyuridine 5'-triphosphate nucleotidohydrolase from Mesorhizobium japonicum (strain LMG 29417 / CECT 9101 / MAFF 303099) (Mesorhizobium loti (strain MAFF 303099)).